The following is a 219-amino-acid chain: MKKSQYFIVFICFFVLFSVHPIAAAAADSDNSTVNEWFQKKDEKTADQSEQKKEKTTKTADETEGAAAPSVSAFDFVKMIFALLFVIVLIYGLVKLMNKRNRLLKPFQYVENIGGTSVGQNRSIQLIKVGKSVLVVGVGETIQLLKEIEDEKEIEVILSQHEEAMSSKIEWQKFVKPLKSSEHQPQQKLPSFSKALKEQLEELKQNRSEGKKKGPRHHE.

Positions 1–26 (MKKSQYFIVFICFFVLFSVHPIAAAA) are cleaved as a signal peptide. Residues 41–61 (KDEKTADQSEQKKEKTTKTAD) show a composition bias toward basic and acidic residues. Residues 41–62 (KDEKTADQSEQKKEKTTKTADE) form a disordered region. A helical transmembrane segment spans residues 71–96 (VSAFDFVKMIFALLFVIVLIYGLVKL). Over residues 200–212 (LEELKQNRSEGKK) the composition is skewed to basic and acidic residues. The tract at residues 200–219 (LEELKQNRSEGKKKGPRHHE) is disordered.

The protein localises to the cell membrane. In terms of biological role, may be a structural component of the flagellum that anchors the rod to the membrane. This is Flagellar biosynthetic protein FliZ (fliZ) from Bacillus subtilis (strain 168).